A 121-amino-acid chain; its full sequence is Large ribosomal subunit protein bL12 (121 aa).

The protein belongs to the bacterial ribosomal protein bL12 family. As to quaternary structure, homodimer. Part of the ribosomal stalk of the 50S ribosomal subunit. Forms a multimeric L10(L12)X complex, where L10 forms an elongated spine to which 2 to 4 L12 dimers bind in a sequential fashion. Binds GTP-bound translation factors.

In terms of biological role, forms part of the ribosomal stalk which helps the ribosome interact with GTP-bound translation factors. Is thus essential for accurate translation. In Klebsiella pneumoniae (strain 342), this protein is Large ribosomal subunit protein bL12.